The chain runs to 121 residues: Neuromedin-B (121 aa).

The signal sequence occupies residues Met-1–Val-24. Position 56 is a methionine amide (Met-56). Positions Ser-60–Lys-121 are excised as a propeptide.

It belongs to the bombesin/neuromedin-B/ranatensin family.

The protein resides in the secreted. It localises to the cell projection. It is found in the neuron projection. Its function is as follows. Stimulates smooth muscle contraction. Induces sighing by acting directly on the pre-Botzinger complex, a cluster of several thousand neurons in the ventrolateral medulla responsible for inspiration during respiratory activity. Contributes to the induction of sneezing following exposure to chemical irritants or allergens which causes release of NMB by nasal sensory neurons and activation of NMBR-expressing neurons in the sneeze-evoking region of the brainstem. These in turn activate neurons of the caudal ventral respiratory group, giving rise to the sneezing response. Contributes to induction of acute itch, possibly through activation of the NMBR receptor on dorsal root ganglion neurons. Increases expression of NMBR and steroidogenic mediators STAR, CYP11A1 and HSD3B1 in Leydig cells, induces secretion of testosterone by Leydig cells and also promotes Leydig cell proliferation. Plays a role in the innate immune response to influenza A virus infection by enhancing interferon alpha expression and reducing expression of IL6. Plays a role in CSF1-induced proliferation of osteoclast precursors by contributing to the positive regulation of the expression of the CSF1 receptor CSF1R. The sequence is that of Neuromedin-B (NMB) from Homo sapiens (Human).